Here is a 236-residue protein sequence, read N- to C-terminus: 2-C-methyl-D-erythritol 4-phosphate cytidylyltransferase (236 aa).

The protein belongs to the IspD/TarI cytidylyltransferase family. IspD subfamily.

The enzyme catalyses 2-C-methyl-D-erythritol 4-phosphate + CTP + H(+) = 4-CDP-2-C-methyl-D-erythritol + diphosphate. It participates in isoprenoid biosynthesis; isopentenyl diphosphate biosynthesis via DXP pathway; isopentenyl diphosphate from 1-deoxy-D-xylulose 5-phosphate: step 2/6. Functionally, catalyzes the formation of 4-diphosphocytidyl-2-C-methyl-D-erythritol from CTP and 2-C-methyl-D-erythritol 4-phosphate (MEP). In Azoarcus sp. (strain BH72), this protein is 2-C-methyl-D-erythritol 4-phosphate cytidylyltransferase.